Here is a 493-residue protein sequence, read N- to C-terminus: Exosome complex component Rrp41 (493 aa).

Disordered stretches follow at residues 244 to 264 (VSEE…PSPV) and 291 to 493 (LASE…EKDE). A compositionally biased stretch (basic and acidic residues) spans 249-259 (APEKGAEKEVL). The segment covering 297–377 (PDFEDELEEE…ALEEETELEA (81 aa)) has biased composition (acidic residues). Over residues 383-400 (PELKEFDEIEARLEKEDA) the composition is skewed to basic and acidic residues. Positions 401 to 471 (SIEAEEEIEP…EAEEEPEEEK (71 aa)) are enriched in acidic residues. Residues 472-493 (SEGPWKVVKDPSEAGTRGEKDE) are compositionally biased toward basic and acidic residues.

The protein belongs to the RNase PH family. Rrp41 subfamily. In terms of assembly, component of the archaeal exosome complex. Forms a hexameric ring-like arrangement composed of 3 Rrp41-Rrp42 heterodimers. The hexameric ring associates with a trimer of Rrp4 and/or Csl4 subunits.

It localises to the cytoplasm. Its function is as follows. Catalytic component of the exosome, which is a complex involved in RNA degradation. Has 3'-&gt;5' exoribonuclease activity. Can also synthesize heteromeric RNA-tails. The sequence is that of Exosome complex component Rrp41 from Methanosarcina mazei (strain ATCC BAA-159 / DSM 3647 / Goe1 / Go1 / JCM 11833 / OCM 88) (Methanosarcina frisia).